The primary structure comprises 414 residues: uncharacterized protein (414 aa).

Positions 1–16 (MRVILLLAFLISLTEC) are cleaved as a signal peptide. Residues 20–59 (SEDLALYDLVEEVGVNFYEWFDIPRDASSNQVKKAYRKLT) enclose the Myb-like 1 domain. The 65-residue stretch at 35–99 (NFYEWFDIPR…ELREKYDNVL (65 aa)) folds into the J domain. The helical transmembrane segment at 125–145 (ILVLLFIGTIAHYLMMWAAYF) threads the bilayer. The disordered stretch occupies residues 211–234 (MTPKEVEPEEPTEEELAQQRRQQR). Acidic residues predominate over residues 217-226 (EPEEPTEEEL). The region spanning 274–320 (AQKQSGATWTPDELASLVRLSTEKYPAGTPNRWEQMGRVLNRSAEDV) is the Myb-like 2 domain. Residues 352-407 (KSEDDWSQAEQKAFETALQKYPKGTDERWERISEEIGSKTKKQVMVRFKQLAEMIR) enclose the SANT domain.

Its subcellular location is the nucleus membrane. This is an uncharacterized protein from Caenorhabditis elegans.